A 6306-amino-acid chain; its full sequence is Adhesion G-protein coupled receptor V1 (6306 aa).

The signal sequence occupies residues 1–29 (MSVFLGPGMPSASLLVNLLSALLILFVFG). 22 consecutive Calx-beta domains span residues 30–117 (ETEI…FHLT), 133–237 (VTVT…IQLK), 262–362 (PVRF…HIML), 388–488 (KPYG…LQIL), 645–745 (PAIA…TLSL), 763–861 (DLII…VVLS), 876–979 (VNIT…VILL), 993–1093 (ATLR…IILL), 1108–1208 (TVII…LKLV), 1444–1544 (AMPR…FILK), 1564–1665 (TIQK…RVTL), 1710–1809 (TGLP…VELL), 1850–1952 (ILVT…VSVL), 1966–2079 (TLTV…IELL), 2107–2206 (QLII…VQLM), 2222–2324 (VIII…VQLT), 2441–2541 (TLCL…FLIS), 2584–2676 (NISP…VSLV), 2689–2789 (DTVR…QVIL), 2814–2925 (LTVE…VNLT), 2947–3048 (TAQV…LILT), and 3063–3172 (LIIV…CTLF). Over 30-5908 (ETEIRFTGQT…TDNLSSYNEA (5879 aa)) the chain is Extracellular. EAR repeat units follow at residues 3255–3296 (VFSV…RWQG), 3297–3345 (IFIP…TFTS), 3348–3393 (KLFL…RWNG), 3395–3439 (SFVL…RWSG), 3441–3488 (GFIN…IWEM), and 3492–3534 (SFRY…CWNS). Calx-beta domains lie at 3525-3625 (DMSA…KVQL), 3639-3739 (SVTI…IVTL), 3775-3875 (GLVG…VTIT), 3899-4006 (AEIM…ISLI), 4020-4123 (VTVV…IQLI), 4139-4239 (IIIR…EFQL), 4255-4354 (ANIT…LTIT), 4387-4489 (RIII…ILLT), 4512-4612 (SPFG…IIKL), 4634-4734 (EFGD…VIQL), 4992-5095 (SGFI…INLT), 5288-5332 (AVEE…YVFL), and 5368-5468 (IGFS…FVEL). One can recognise a GAIN-B domain in the interval 5747–5903 (SILALHWYPQ…AVYARTDNLS (157 aa)). Cystine bridges form between Cys-5856-Cys-5885 and Cys-5873-Cys-5887. The tract at residues 5856-5903 (CLLWNQAAASWLSDSQFCKVVEETADYVECACSHMSVYAVYARTDNLS) is GPS. The chain crosses the membrane as a helical span at residues 5909-5929 (FFTSGFICISGLCLAVLSHIF). Topologically, residues 5930–5939 (CARYSMFAAK) are cytoplasmic. Residues 5940-5960 (LLTHMMAASLGTQILFLASAY) form a helical membrane-spanning segment. Over 5961 to 5979 (ASPQLAEESCSAMAAVTHY) the chain is Extracellular. A helical transmembrane segment spans residues 5980-6000 (LYLCQFSWMLIQSVNFWYVLV). Topologically, residues 6001-6010 (MNDEHTERRY) are cytoplasmic. Residues 6011-6031 (LLFFLLSWGLPAFVVILLIVI) form a helical membrane-spanning segment. Residues 6032–6059 (LKGIYHQSMSQIYGLIHGDLCFIPNVYA) are Extracellular-facing. Residues 6060–6080 (ALFTAALVPLTCLVVVFVVFI) form a helical membrane-spanning segment. Topologically, residues 6081-6104 (HAYQVKPQWKAYDDVFRGRTNAAE) are cytoplasmic. The chain crosses the membrane as a helical span at residues 6105–6125 (IPLILYLFALISVTWLWGGLH). The Extracellular segment spans residues 6126–6133 (MAYRHFWM). The helical transmembrane segment at 6134–6154 (LVLFVIFNSLQGLYVFMVYFI) threads the bilayer. Residues 6155–6306 (LHNQMCCPMK…RRIPIADTHL (152 aa)) are Cytoplasmic-facing. A disordered region spans residues 6216–6248 (ASFQQGSQASPDLKPSPQNGATFPSSGGYGQGS). The span at 6217–6240 (SFQQGSQASPDLKPSPQNGATFPS) shows a compositional bias: polar residues.

This sequence belongs to the G-protein coupled receptor 2 family. Adhesion G-protein coupled receptor (ADGR) subfamily. In terms of assembly, forms a heterodimer, consisting of a large extracellular region (alpha subunit) non-covalently linked to a seven-transmembrane moiety (beta subunit). Component of USH2 complex, composed of ADGRV1, PDZD7, USH2A and WHRN. Interacts with USH2A and WHRN. Interacts (via the cytoplasmic region) with PDZD7. Interacts (via the cytoplasmic region) with MYO7A (via MyTH4-FERM domains). Post-translationally, autoproteolytically cleaved into 2 subunits, an extracellular alpha subunit and a seven-transmembrane subunit. In terms of tissue distribution, expressed at low levels in adult tissues.

It localises to the cell membrane. It is found in the cell projection. The protein resides in the stereocilium membrane. Its subcellular location is the photoreceptor inner segment. G-protein coupled receptor which has an essential role in the development of hearing and vision. Couples to G-alpha(i)-proteins, GNAI1/2/3, G-alpha(q)-proteins, GNAQ, as well as G-alpha(s)-proteins, GNAS, inhibiting adenylate cyclase (AC) activity and cAMP production. Required for the hair bundle ankle formation, which connects growing stereocilia in developing cochlear hair cells of the inner ear. In response to extracellular calcium, activates kinases PKA and PKC to regulate myelination by inhibiting the ubiquitination of MAG, thus enhancing the stability of this protein in myelin-forming cells of the auditory pathway. In retina photoreceptors, the USH2 complex is required for the maintenance of periciliary membrane complex that seems to play a role in regulating intracellular protein transport. Involved in the regulation of bone metabolism. Functionally, cleaved ADGRV1 beta-subunit couples with G-alpha(i)-proteins, GNAI1/2/3, and constitutively inhibits adenylate cyclase (AC) activity with a stronger effect than full ADGRV1. This Homo sapiens (Human) protein is Adhesion G-protein coupled receptor V1.